We begin with the raw amino-acid sequence, 363 residues long: MSTQPIKVLIVDDSALIRSLLTDIINSQTDMEVVGVAPDPLVAREKIKALNPDVLTLDVEMPRMDGLVFLEKLMRLRPMPVLMVSSLTEKSSFLTLRALELGAVDFVTKPKIDISRGMQEYAREITDKLRVAAKARVRQPPHVHLSVERKNTADAVLPMEHRTFSSTEKIIVIGASTGGTEALKSFLVAMPADSPGILITQHMPEAFTRTFAQRLNSLCRISVKEAEHGERILPGHAYVAPGNRHLLLARSGANYVVELSDGPPVSRHRPSVDVLFRSAANRAGRNAVGIIMTGMGDDGAAGMLEMREAGAYTFAQDEKSCVVFGMPKEAIARGGVDEVAPLGEMPRRLFGWLESQGNRAFRV.

One can recognise a Response regulatory domain in the interval 7-124 (KVLIVDDSAL…SRGMQEYARE (118 aa)). D58 carries the post-translational modification 4-aspartylphosphate. The CheB-type methylesterase domain occupies 164-356 (FSSTEKIIVI…RRLFGWLESQ (193 aa)). Residues S176, H202, and D298 contribute to the active site.

This sequence belongs to the CheB family. Phosphorylated by CheA. Phosphorylation of the N-terminal regulatory domain activates the methylesterase activity.

The protein resides in the cytoplasm. It catalyses the reaction [protein]-L-glutamate 5-O-methyl ester + H2O = L-glutamyl-[protein] + methanol + H(+). The catalysed reaction is L-glutaminyl-[protein] + H2O = L-glutamyl-[protein] + NH4(+). Involved in chemotaxis. Part of a chemotaxis signal transduction system that modulates chemotaxis in response to various stimuli. Catalyzes the demethylation of specific methylglutamate residues introduced into the chemoreceptors (methyl-accepting chemotaxis proteins or MCP) by CheR. Also mediates the irreversible deamidation of specific glutamine residues to glutamic acid. This Geobacter metallireducens (strain ATCC 53774 / DSM 7210 / GS-15) protein is Protein-glutamate methylesterase/protein-glutamine glutaminase 1.